The following is a 487-amino-acid chain: GPI mannosyltransferase 1 (487 aa).

A run of 3 helical transmembrane segments spans residues 26 to 46 (PLPL…YGLW), 87 to 107 (ILAW…GPWA), and 121 to 141 (VLFA…LVMG). The interval 147–175 (SAAKGKEKDTEKTKEGGKKGPSVTASTGM) is disordered. Over residues 150–164 (KGKEKDTEKTKEGGK) the composition is skewed to basic and acidic residues. The next 7 helical transmembrane spans lie at 205–225 (LLGV…ITLA), 227–247 (LLLG…PAIV), 289–309 (LLLA…MYRL), 359–379 (IESL…PLTL), 393–413 (FAFV…YLVL), 429–449 (MGLV…QQAY), and 462–482 (GLWM…GVIV).

This sequence belongs to the PIGM family.

It is found in the endoplasmic reticulum membrane. It participates in glycolipid biosynthesis; glycosylphosphatidylinositol-anchor biosynthesis. Its function is as follows. Mannosyltransferase involved in glycosylphosphatidylinositol-anchor biosynthesis. Transfers the first alpha-1,4-mannose to GlcN-acyl-PI during GPI precursor assembly. Required for cell wall integrity. The sequence is that of GPI mannosyltransferase 1 (gim-1) from Neurospora crassa (strain ATCC 24698 / 74-OR23-1A / CBS 708.71 / DSM 1257 / FGSC 987).